Reading from the N-terminus, the 366-residue chain is tRNA/tmRNA (uracil-C(5))-methyltransferase (366 aa).

S-adenosyl-L-methionine contacts are provided by Gln190, Tyr218, Asn223, Glu239, and Asp299. Residue Cys324 is the Nucleophile of the active site. Glu358 acts as the Proton acceptor in catalysis.

It belongs to the class I-like SAM-binding methyltransferase superfamily. RNA M5U methyltransferase family. TrmA subfamily.

It carries out the reaction uridine(54) in tRNA + S-adenosyl-L-methionine = 5-methyluridine(54) in tRNA + S-adenosyl-L-homocysteine + H(+). It catalyses the reaction uridine(341) in tmRNA + S-adenosyl-L-methionine = 5-methyluridine(341) in tmRNA + S-adenosyl-L-homocysteine + H(+). Dual-specificity methyltransferase that catalyzes the formation of 5-methyluridine at position 54 (m5U54) in all tRNAs, and that of position 341 (m5U341) in tmRNA (transfer-mRNA). This Escherichia coli O6:H1 (strain CFT073 / ATCC 700928 / UPEC) protein is tRNA/tmRNA (uracil-C(5))-methyltransferase.